A 38-amino-acid chain; its full sequence is MTPSLANFISSLTAGGLVVLTIAVALIVISRTDRVTRF.

Residues 9-29 (ISSLTAGGLVVLTIAVALIVI) traverse the membrane as a helical segment.

The protein belongs to the PsbX family. Type 1 subfamily. PSII is composed of 1 copy each of membrane proteins PsbA, PsbB, PsbC, PsbD, PsbE, PsbF, PsbH, PsbI, PsbJ, PsbK, PsbL, PsbM, PsbT, PsbX, PsbY, PsbZ, Psb30/Ycf12, at least 3 peripheral proteins of the oxygen-evolving complex and a large number of cofactors. It forms dimeric complexes.

The protein resides in the plastid. Its subcellular location is the chloroplast thylakoid membrane. Functionally, involved in the binding and/or turnover of quinones at the Q(B) site of photosystem II (PSII). PSII is a light-driven water plastoquinone oxidoreductase, using light energy to abstract electrons from H(2)O, generating a proton gradient subsequently used for ATP formation. This chain is Photosystem II reaction center protein X, found in Trieres chinensis (Marine centric diatom).